Consider the following 420-residue polypeptide: UDP-N-acetylglucosamine 1-carboxyvinyltransferase (420 aa).

22–23 contributes to the phosphoenolpyruvate binding site; that stretch reads KN. Arginine 95 is a binding site for UDP-N-acetyl-alpha-D-glucosamine. Cysteine 119 acts as the Proton donor in catalysis. A 2-(S-cysteinyl)pyruvic acid O-phosphothioketal modification is found at cysteine 119. UDP-N-acetyl-alpha-D-glucosamine contacts are provided by residues 124–128, aspartate 307, and isoleucine 329; that span reads RPIDQ.

This sequence belongs to the EPSP synthase family. MurA subfamily.

Its subcellular location is the cytoplasm. It catalyses the reaction phosphoenolpyruvate + UDP-N-acetyl-alpha-D-glucosamine = UDP-N-acetyl-3-O-(1-carboxyvinyl)-alpha-D-glucosamine + phosphate. Its pathway is cell wall biogenesis; peptidoglycan biosynthesis. Functionally, cell wall formation. Adds enolpyruvyl to UDP-N-acetylglucosamine. The polypeptide is UDP-N-acetylglucosamine 1-carboxyvinyltransferase (Myxococcus xanthus (strain DK1622)).